A 321-amino-acid chain; its full sequence is Probable cell division protein WhiA (321 aa).

Residues 275-308 constitute a DNA-binding region (H-T-H motif); the sequence is SLDELGRLADPPMTKDAVAGRIRRLLAMADKRAA.

The protein belongs to the WhiA family.

In terms of biological role, involved in cell division and chromosome segregation. This Micrococcus luteus (strain ATCC 4698 / DSM 20030 / JCM 1464 / CCM 169 / CCUG 5858 / IAM 1056 / NBRC 3333 / NCIMB 9278 / NCTC 2665 / VKM Ac-2230) (Micrococcus lysodeikticus) protein is Probable cell division protein WhiA.